We begin with the raw amino-acid sequence, 243 residues long: Probable transcriptional regulatory protein Tbd_2215 (243 aa).

It belongs to the TACO1 family.

It localises to the cytoplasm. The sequence is that of Probable transcriptional regulatory protein Tbd_2215 from Thiobacillus denitrificans (strain ATCC 25259 / T1).